Here is an 88-residue protein sequence, read N- to C-terminus: Small ribosomal subunit protein bS20 (88 aa).

The protein belongs to the bacterial ribosomal protein bS20 family.

Binds directly to 16S ribosomal RNA. The protein is Small ribosomal subunit protein bS20 of Nitrobacter winogradskyi (strain ATCC 25391 / DSM 10237 / CIP 104748 / NCIMB 11846 / Nb-255).